Consider the following 848-residue polypeptide: DNA-binding protein RFX6 (848 aa).

Residues Thr56–Glu131 constitute a DNA-binding region (RFX-type winged-helix).

The protein belongs to the RFX family. In terms of tissue distribution, expressed in progenitors and hormone expressing cells of the islet lineage.

The protein localises to the nucleus. In terms of biological role, transcription factor required to direct islet cell differentiation during endocrine pancreas development. The sequence is that of DNA-binding protein RFX6 (rfx6) from Danio rerio (Zebrafish).